The sequence spans 251 residues: Mycofactocin precursor peptide peptidase (251 aa).

Residues Glu-38, His-40, Asp-49, His-128, and Glu-167 each coordinate a divalent metal cation.

Belongs to the creatininase superfamily. Homooctamer. The cofactor is Fe(2+). It depends on Zn(2+) as a cofactor.

The catalysed reaction is [mycofactocin precursor peptide]-C-terminal glycyl-N-{5-[(4-hydroxyphenyl)methyl]-4,4-dimethyl-2-oxopyrrolidin-3-yl}acetamide + H2O = [mycofactocin precursor peptide]-C-terminal glycine + 3-amino-5-[(4-hydroxyphenyl)methyl]-4,4-dimethyl-2-pyrrolidin-2-one. Its function is as follows. Peptidase involved in the biosynthesis of the enzyme cofactor mycofactocin (MFT). Catalyzes cleavage of the MftC-modified MftA peptide to liberate its final two residues, which consist of a cross-linked valine-decarboxylated tyrosine dipeptide (named 3-amino-5-[(4-hydroxyphenyl)methyl]-4,4-dimethyl-2-pyrrolidin-2-one or ADHP). This is Mycofactocin precursor peptide peptidase (mftE) from Mycobacterium tuberculosis (strain CDC 1551 / Oshkosh).